The chain runs to 272 residues: Proteasome assembly chaperone 1 (272 aa).

The protein belongs to the PSMG1 family. As to quaternary structure, forms a heterodimer with psmg2.

Chaperone protein which promotes assembly of the 20S proteasome as part of a heterodimer with psmg2. This chain is Proteasome assembly chaperone 1 (psmG1), found in Dictyostelium discoideum (Social amoeba).